The chain runs to 361 residues: Tyrosine--tRNA ligase (361 aa).

5 residues coordinate L-tyrosine: Y36, Y162, Q166, D169, and Q184. Positions 235-239 (KMSKS) match the 'KMSKS' region motif. Residue K238 participates in ATP binding.

Belongs to the class-I aminoacyl-tRNA synthetase family. TyrS type 4 subfamily. As to quaternary structure, homodimer.

It is found in the cytoplasm. It carries out the reaction tRNA(Tyr) + L-tyrosine + ATP = L-tyrosyl-tRNA(Tyr) + AMP + diphosphate + H(+). Its function is as follows. Catalyzes the attachment of tyrosine to tRNA(Tyr) in a two-step reaction: tyrosine is first activated by ATP to form Tyr-AMP and then transferred to the acceptor end of tRNA(Tyr). In Sulfolobus acidocaldarius (strain ATCC 33909 / DSM 639 / JCM 8929 / NBRC 15157 / NCIMB 11770), this protein is Tyrosine--tRNA ligase.